The sequence spans 157 residues: Transcription antitermination protein NusB (157 aa).

The protein belongs to the NusB family.

Functionally, involved in transcription antitermination. Required for transcription of ribosomal RNA (rRNA) genes. Binds specifically to the boxA antiterminator sequence of the ribosomal RNA (rrn) operons. The polypeptide is Transcription antitermination protein NusB (Xylella fastidiosa (strain M12)).